We begin with the raw amino-acid sequence, 491 residues long: Bifunctional protein HldE (491 aa).

A ribokinase region spans residues 1-330 (MDRKMVESLF…AAVSLEHRDS (330 aa)). 205–208 (NRKE) is a binding site for ATP. The active site involves Asp-275. The interval 356-491 (FTNGCFDLLH…KVLERYTDEQ (136 aa)) is cytidylyltransferase.

The protein in the N-terminal section; belongs to the carbohydrate kinase PfkB family. In the C-terminal section; belongs to the cytidylyltransferase family. In terms of assembly, homodimer.

It catalyses the reaction D-glycero-beta-D-manno-heptose 7-phosphate + ATP = D-glycero-beta-D-manno-heptose 1,7-bisphosphate + ADP + H(+). The enzyme catalyses D-glycero-beta-D-manno-heptose 1-phosphate + ATP + H(+) = ADP-D-glycero-beta-D-manno-heptose + diphosphate. It functions in the pathway nucleotide-sugar biosynthesis; ADP-L-glycero-beta-D-manno-heptose biosynthesis; ADP-L-glycero-beta-D-manno-heptose from D-glycero-beta-D-manno-heptose 7-phosphate: step 1/4. The protein operates within nucleotide-sugar biosynthesis; ADP-L-glycero-beta-D-manno-heptose biosynthesis; ADP-L-glycero-beta-D-manno-heptose from D-glycero-beta-D-manno-heptose 7-phosphate: step 3/4. In terms of biological role, catalyzes the phosphorylation of D-glycero-D-manno-heptose 7-phosphate at the C-1 position to selectively form D-glycero-beta-D-manno-heptose-1,7-bisphosphate. Catalyzes the ADP transfer from ATP to D-glycero-beta-D-manno-heptose 1-phosphate, yielding ADP-D-glycero-beta-D-manno-heptose. The chain is Bifunctional protein HldE from Trichlorobacter lovleyi (strain ATCC BAA-1151 / DSM 17278 / SZ) (Geobacter lovleyi).